Consider the following 162-residue polypeptide: Blue copper protein 1b (162 aa).

The signal sequence occupies residues Met1–Ala23. The Phytocyanin domain occupies Thr25 to Ala125. His65 lines the Cu cation pocket. Residue Asn71 is glycosylated (N-linked (GlcNAc...) asparagine). Cys78 and Cys112 are oxidised to a cystine. Cu cation is bound by residues Cys106, His111, and Met117. Residues Val142–Ala162 form a helical membrane-spanning segment.

It is found in the membrane. The polypeptide is Blue copper protein 1b (Medicago truncatula (Barrel medic)).